The chain runs to 132 residues: Large-conductance mechanosensitive channel (132 aa).

The next 3 membrane-spanning stretches (helical) occupy residues 14–34, 38–58, and 69–89; these read VIDL…VSSL, IITP…LKIT, and FIQT…FVKV.

The protein belongs to the MscL family. In terms of assembly, homopentamer.

Its subcellular location is the cell membrane. Channel that opens in response to stretch forces in the membrane lipid bilayer. May participate in the regulation of osmotic pressure changes within the cell. The chain is Large-conductance mechanosensitive channel from Bacillus thuringiensis (strain Al Hakam).